The sequence spans 338 residues: Eukaryotic translation initiation factor 3 subunit H (338 aa).

In terms of domain architecture, MPN spans valine 22 to alanine 154.

Belongs to the eIF-3 subunit H family. In terms of assembly, component of the eukaryotic translation initiation factor 3 (eIF-3) complex. The eIF-3 complex interacts with pix. Interacts with mxt.

Its subcellular location is the cytoplasm. In terms of biological role, component of the eukaryotic translation initiation factor 3 (eIF-3) complex, which is involved in protein synthesis of a specialized repertoire of mRNAs and, together with other initiation factors, stimulates binding of mRNA and methionyl-tRNAi to the 40S ribosome. The eIF-3 complex specifically targets and initiates translation of a subset of mRNAs involved in cell proliferation. This is Eukaryotic translation initiation factor 3 subunit H from Drosophila melanogaster (Fruit fly).